Consider the following 202-residue polypeptide: Thymidylate kinase (202 aa).

7–14 (GIDGSGKT) contributes to the ATP binding site.

This sequence belongs to the thymidylate kinase family.

The enzyme catalyses dTMP + ATP = dTDP + ADP. Functionally, phosphorylation of dTMP to form dTDP in both de novo and salvage pathways of dTTP synthesis. This Ehrlichia chaffeensis (strain ATCC CRL-10679 / Arkansas) protein is Thymidylate kinase.